We begin with the raw amino-acid sequence, 139 residues long: Endoribonuclease YbeY (139 aa).

3 residues coordinate Zn(2+): histidine 99, histidine 103, and histidine 109.

Belongs to the endoribonuclease YbeY family. Zn(2+) serves as cofactor.

The protein resides in the cytoplasm. Functionally, single strand-specific metallo-endoribonuclease involved in late-stage 70S ribosome quality control and in maturation of the 3' terminus of the 16S rRNA. In Sulfurimonas denitrificans (strain ATCC 33889 / DSM 1251) (Thiomicrospira denitrificans (strain ATCC 33889 / DSM 1251)), this protein is Endoribonuclease YbeY.